A 133-amino-acid polypeptide reads, in one-letter code: Otoraplin (133 aa).

Positions 1–23 (MAKTFYVVVIVLCLGFIHQKAYG) are cleaved as a signal peptide. 2 disulfides stabilise this stretch: Cys-35–Cys-40 and Cys-58–Cys-132. The region spanning 42 to 115 (YAISFGRAED…PSSLVTELTV (74 aa)) is the SH3 domain.

Belongs to the MIA/OTOR family.

The protein resides in the secreted. The chain is Otoraplin (OTOR) from Aquarana catesbeiana (American bullfrog).